We begin with the raw amino-acid sequence, 126 residues long: UPF0325 protein PBPRA2971 (126 aa).

It belongs to the UPF0325 family.

This is UPF0325 protein PBPRA2971 from Photobacterium profundum (strain SS9).